A 546-amino-acid polypeptide reads, in one-letter code: NAD(P)H-quinone oxidoreductase chain 4 (546 aa).

14 consecutive transmembrane segments (helical) span residues 17 to 37 (VPWL…VPFI), 48 to 68 (WYAL…YLNG), 103 to 123 (LILL…PVSF), 127 to 147 (LFYF…AVQD), 149 to 169 (LLFF…LAIW), 181 to 201 (FILY…AMGF), 222 to 242 (GFQL…LPIV), 256 to 276 (TAPV…YALL), 290 to 310 (FAPL…LTSF), 327 to 347 (MGFV…GAML), 348 to 368 (QMIS…ATYD), 389 to 409 (FALW…SGFV), 430 to 450 (VVIC…LLSM), and 477 to 497 (VYII…PRLM).

Belongs to the complex I subunit 4 family.

It is found in the cellular thylakoid membrane. It catalyses the reaction a plastoquinone + NADH + (n+1) H(+)(in) = a plastoquinol + NAD(+) + n H(+)(out). The enzyme catalyses a plastoquinone + NADPH + (n+1) H(+)(in) = a plastoquinol + NADP(+) + n H(+)(out). In terms of biological role, NDH-1 shuttles electrons from NAD(P)H, via FMN and iron-sulfur (Fe-S) centers, to quinones in the respiratory chain. The immediate electron acceptor for the enzyme in this species is believed to be plastoquinone. Couples the redox reaction to proton translocation (for every two electrons transferred, four hydrogen ions are translocated across the cytoplasmic membrane), and thus conserves the redox energy in a proton gradient. The chain is NAD(P)H-quinone oxidoreductase chain 4 from Parasynechococcus marenigrum (strain WH8102).